Reading from the N-terminus, the 232-residue chain is Translation initiation factor IF-3 (232 aa).

Disordered stretches follow at residues methionine 1–arginine 21 and leucine 184–arginine 232. A compositionally biased stretch (low complexity) spans alanine 193–proline 208. Positions alanine 209–alanine 222 are enriched in pro residues. A compositionally biased stretch (low complexity) spans proline 223–arginine 232.

The protein belongs to the IF-3 family. As to quaternary structure, monomer.

The protein resides in the cytoplasm. Its function is as follows. IF-3 binds to the 30S ribosomal subunit and shifts the equilibrium between 70S ribosomes and their 50S and 30S subunits in favor of the free subunits, thus enhancing the availability of 30S subunits on which protein synthesis initiation begins. The protein is Translation initiation factor IF-3 of Anaeromyxobacter sp. (strain K).